A 358-amino-acid polypeptide reads, in one-letter code: MRPLVATVDLTALRHNYLLAKQCAPQRKAFAVVKANAYGHGAPEAVTALREIADGFAVACLEEAEVIRGCAPEARILLLEGCFEPSEYLRAAELGLDIAVQDARQADWLLAADLARPLNVWLKLDSGMHRLGFSVDGLRECHARLKGAAQVGELNLISHFACADERGHALTETQLERYAELLELPFEHCSLANSAAVLTLPQAHMAWIRPGIMLYGATPFAELSARELGLKPVMTLTGALIAVRDVPVGESVGYGASWVAQRPSRIGTVSCGYADGYPRTAPSGTSVVIHGQRVPLAGRVSMDMLAVDLTDLPQAQLGDAVELWGAQMPIDELAQACGTIGYELLTKVTGRVPRRYIG.

Residue lysine 34 is the Proton acceptor; specific for D-alanine of the active site. Lysine 34 is modified (N6-(pyridoxal phosphate)lysine). Arginine 130 provides a ligand contact to substrate. Tyrosine 254 acts as the Proton acceptor; specific for L-alanine in catalysis. A substrate-binding site is contributed by methionine 302.

It belongs to the alanine racemase family. Pyridoxal 5'-phosphate is required as a cofactor.

It catalyses the reaction L-alanine = D-alanine. The protein operates within amino-acid biosynthesis; D-alanine biosynthesis; D-alanine from L-alanine: step 1/1. Catalyzes the interconversion of L-alanine and D-alanine. May also act on other amino acids. The chain is Alanine racemase (alr) from Stutzerimonas stutzeri (strain A1501) (Pseudomonas stutzeri).